The following is an 88-amino-acid chain: Small ribosomal subunit protein uS17 (88 aa).

Belongs to the universal ribosomal protein uS17 family. Part of the 30S ribosomal subunit.

Its function is as follows. One of the primary rRNA binding proteins, it binds specifically to the 5'-end of 16S ribosomal RNA. In Leuconostoc mesenteroides subsp. mesenteroides (strain ATCC 8293 / DSM 20343 / BCRC 11652 / CCM 1803 / JCM 6124 / NCDO 523 / NBRC 100496 / NCIMB 8023 / NCTC 12954 / NRRL B-1118 / 37Y), this protein is Small ribosomal subunit protein uS17.